The following is a 103-amino-acid chain: Histone H4, minor (103 aa).

Residues 1-12 (MAGGKGGKGMGK) are compositionally biased toward gly residues. The interval 1–29 (MAGGKGGKGMGKVGAKRHSRKSNKASIEG) is disordered. Residues Lys5, Lys8, Lys12, and Lys16 each carry the N6-acetyllysine modification. The segment covering 14-23 (GAKRHSRKSN) has biased composition (basic residues). The DNA-binding element occupies 16 to 21 (KRHSRK).

Belongs to the histone H4 family. In terms of assembly, the nucleosome is a histone octamer containing two molecules each of H2A, H2B, H3 and H4 assembled in one H3-H4 heterotetramer and two H2A-H2B heterodimers. The octamer wraps approximately 147 bp of DNA.

It is found in the nucleus. The protein resides in the chromosome. Its function is as follows. Core component of nucleosome. Nucleosomes wrap and compact DNA into chromatin, limiting DNA accessibility to the cellular machineries which require DNA as a template. Histones thereby play a central role in transcription regulation, DNA repair, DNA replication and chromosomal stability. DNA accessibility is regulated via a complex set of post-translational modifications of histones, also called histone code, and nucleosome remodeling. This is Histone H4, minor from Tetrahymena pyriformis.